We begin with the raw amino-acid sequence, 107 residues long: uncharacterized protein (107 aa).

This is an uncharacterized protein from Acidianus convivator (ABV).